The chain runs to 287 residues: Survival motor neuron protein (287 aa).

The segment at M1–D27 is disordered. Positions P8–D39 are P1 (binding site for GEMIN2). Phosphothreonine is present on T20. Residues S23 and S26 each carry the phosphoserine modification. K46 participates in a covalent cross-link: Glycyl lysine isopeptide (Lys-Gly) (interchain with G-Cter in SUMO2). Residues G52 to A83 are disordered. The span at S63–K77 shows a compositional bias: basic residues. T64 is subject to Phosphothreonine. Positions Q86 to N146 constitute a Tudor domain. The required for interaction with RPP20/POP7 stretch occupies residues K92–K205. A disordered region spans residues E148–P216. The segment covering E157–K180 has biased composition (polar residues). K205 is covalently cross-linked (Glycyl lysine isopeptide (Lys-Gly) (interchain with G-Cter in SUMO2)). The interval P234–W261 is P2 (binding site for SM B). The tract at residues G273–N287 is required for interaction with SYNCRIP.

It belongs to the SMN family. In terms of assembly, homooligomer; may form higher order homooligomers in the dimer to octamer range. Part of the core SMN complex that contains SMN1, GEMIN2/SIP1, DDX20/GEMIN3, GEMIN4, GEMIN5, GEMIN6, GEMIN7, GEMIN8 and STRAP/UNRIP. Part of the SMN-Sm complex that contains SMN1, GEMIN2/SIP1, DDX20/GEMIN3, GEMIN4, GEMIN5, GEMIN6, GEMIN7, GEMIN8, STRAP/UNRIP and the Sm proteins SNRPB, SNRPD1, SNRPD2, SNRPD3, SNRPE, SNRPF and SNRPG. Component of an import snRNP complex composed of KPNB1, RNUT1, SMN1 and ZNF259. Interacts with DDX20, FBL, NOLA1, RNUT1, SYNCRIP and with several spliceosomal snRNP core Sm proteins, including SNRPB, SNRPD1, SNRPD2, SNRPD3, SNRPE and ILF3. Interacts with GEMIN2; the interaction is direct. Interacts with GEMIN3; the interaction is direct. Interacts with GEMIN8; the interaction is direct. Interacts with SNRPB; the interaction is direct. Interacts (via Tudor domain) with SNRPD1 (via C-terminus); the interaction is direct. Interacts with SNRPD2; the interaction is direct. Interacts (via Tudor domain) with SNRPD3 (via C-terminus); the interaction is direct. Interacts with SNRPE; the interaction is direct. Interacts with OSTF1, LSM10, LSM11 and RPP20/POP7. Interacts (via C-terminal region) with ZPR1 (via C-terminal region). Interacts (via Tudor domain) with COIL. Interacts with SETX; recruits SETX to POLR2A. Interacts with POLR2A (via the C-terminal domain (CTD)). Interacts with PRMT5. Interacts with XRN2. Interacts (via C-terminus) with FMR1 (via C-terminus); the interaction is direct and occurs in a RNA-independent manner. Interacts (via Tudor domain) with SF3B2 ('Arg-508'-methylated form). Interacts with WRAP53/TCAB1. Interacts (via Tudor domain) with ELAVL4 in an RNA-independent manner; the interaction is required for localization of ELAVL4 to RNA granules. Interacts with FRG1.

Its subcellular location is the nucleus. The protein resides in the gem. It localises to the cajal body. It is found in the cytoplasm. The protein localises to the cytoplasmic granule. Its subcellular location is the perikaryon. The protein resides in the cell projection. It localises to the neuron projection. It is found in the axon. The protein localises to the myofibril. Its subcellular location is the sarcomere. The protein resides in the z line. In terms of biological role, the SMN complex catalyzes the assembly of small nuclear ribonucleoproteins (snRNPs), the building blocks of the spliceosome, and thereby plays an important role in the splicing of cellular pre-mRNAs. Most spliceosomal snRNPs contain a common set of Sm proteins SNRPB, SNRPD1, SNRPD2, SNRPD3, SNRPE, SNRPF and SNRPG that assemble in a heptameric protein ring on the Sm site of the small nuclear RNA to form the core snRNP (Sm core). In the cytosol, the Sm proteins SNRPD1, SNRPD2, SNRPE, SNRPF and SNRPG are trapped in an inactive 6S pICln-Sm complex by the chaperone CLNS1A that controls the assembly of the core snRNP. To assemble core snRNPs, the SMN complex accepts the trapped 5Sm proteins from CLNS1A forming an intermediate. Binding of snRNA inside 5Sm ultimately triggers eviction of the SMN complex, thereby allowing binding of SNRPD3 and SNRPB to complete assembly of the core snRNP. Within the SMN complex, SMN1 acts as a structural backbone and together with GEMIN2 it gathers the Sm complex subunits. Ensures the correct splicing of U12 intron-containing genes that may be important for normal motor and proprioceptive neurons development. Also required for resolving RNA-DNA hybrids created by RNA polymerase II, that form R-loop in transcription terminal regions, an important step in proper transcription termination. May also play a role in the metabolism of small nucleolar ribonucleoprotein (snoRNPs). In Canis lupus familiaris (Dog), this protein is Survival motor neuron protein (SMN1).